The following is a 502-amino-acid chain: Neuronal acetylcholine receptor subunit alpha-7 (502 aa).

Residues 1 to 23 (MGLRALMLWLLAAAGLVRESLQG) form the signal peptide. Residues 24-233 (EFQRKLYKEL…VTMRRRTLYY (210 aa)) lie on the Extracellular side of the membrane. Positions 42 and 44 each coordinate Ca(2+). N-linked (GlcNAc...) asparagine glycans are attached at residues Asn46, Asn90, and Asn133. Cysteines 150 and 164 form a disulfide. Residues Thr172 and Tyr210 each coordinate Ca(2+). A disulfide bond links Cys212 and Cys213. Transmembrane regions (helical) follow at residues 234-254 (GLNLLIPCVLISALALLVFLL), 262-282 (ISLGITVLLSLTVFMLLVAEI), and 295-315 (QYFASTMIIVGLSVVVTVIVL). The Cytoplasmic segment spans residues 316–469 (QYHHHDPDGG…WKFAASVVDR (154 aa)). Residues 470–490 (LCLMAFSVFTIICTIGILMSA) traverse the membrane as a helical segment.

This sequence belongs to the ligand-gated ion channel (TC 1.A.9) family. Acetylcholine receptor (TC 1.A.9.1) subfamily. Alpha-7/CHRNA7 sub-subfamily. In terms of assembly, homopentamer. Can also form heteropentamers with CHRNB2, mainly found in basal forebrain cholinergic neurons.

It localises to the postsynaptic cell membrane. It is found in the cell membrane. It carries out the reaction Ca(2+)(in) = Ca(2+)(out). It catalyses the reaction K(+)(in) = K(+)(out). The catalysed reaction is Na(+)(in) = Na(+)(out). The enzyme catalyses choline(out) = choline(in). It carries out the reaction NH4(+)(in) = NH4(+)(out). It catalyses the reaction L-arginine(in) = L-arginine(out). The catalysed reaction is guanidine(out) = guanidine(in). Activated by a myriad of ligands such as acetylcholine, cytisine, nicotine, choline and epibatidine. Activity is modulated by positive allosteric modulators (PAMs), such as flavonoids, with a wide range of chemical diversity, pharmacological sensitivity and efficacy. AChR activity is inhibited by the antagonists alpha-conotoxons RgIA, ImI and ImII, small disulfide-constrained peptides from cone snails. Component of neuronal acetylcholine receptors (nAChRs) that function as pentameric, ligand-gated cation channels with high calcium permeability among other activities. nAChRs are excitatory neurotrasnmitter receptors formed by a collection of nAChR subunits known to mediate synaptic transmission in the nervous system and the neuromuscular junction. Each nAchR subunit confers differential attributes to channel properties, including activation, deactivation and desensitization kinetics, pH sensitivity, cation permeability, and binding to allosteric modulators. CHRNA7 is an homooligomeric neuronal acetylcholine receptor abundantly expressed in the central nervous system. Characterized by a fast desensitization and high calcium permeability. Also expressed in non-neuronal cells such as immune cells like lymphocytes, monocytes and macrophages. This chain is Neuronal acetylcholine receptor subunit alpha-7 (CHRNA7), found in Gallus gallus (Chicken).